The primary structure comprises 320 residues: Biotin synthase (320 aa).

The Radical SAM core domain occupies 39–267 (NAIQLATLLS…KARVRLSAGR (229 aa)). [4Fe-4S] cluster contacts are provided by cysteine 54, cysteine 58, and cysteine 61. The [2Fe-2S] cluster site is built by cysteine 98, cysteine 130, cysteine 190, and arginine 262.

Belongs to the radical SAM superfamily. Biotin synthase family. In terms of assembly, homodimer. [4Fe-4S] cluster is required as a cofactor. Requires [2Fe-2S] cluster as cofactor.

The catalysed reaction is (4R,5S)-dethiobiotin + (sulfur carrier)-SH + 2 reduced [2Fe-2S]-[ferredoxin] + 2 S-adenosyl-L-methionine = (sulfur carrier)-H + biotin + 2 5'-deoxyadenosine + 2 L-methionine + 2 oxidized [2Fe-2S]-[ferredoxin]. Its pathway is cofactor biosynthesis; biotin biosynthesis; biotin from 7,8-diaminononanoate: step 2/2. Catalyzes the conversion of dethiobiotin (DTB) to biotin by the insertion of a sulfur atom into dethiobiotin via a radical-based mechanism. This chain is Biotin synthase, found in Synechococcus elongatus (strain ATCC 33912 / PCC 7942 / FACHB-805) (Anacystis nidulans R2).